An 87-amino-acid chain; its full sequence is FXYD domain-containing ion transport regulator 3 (87 aa).

An N-terminal signal peptide occupies residues 1–20 (MQKVTLGLLVFLAGFPVLDA). Topologically, residues 21–38 (NDLEDKNSPFYYDWHSLQ) are extracellular. Residues 39-59 (VGGLICAGVLCAMGIIIVMSA) traverse the membrane as a helical segment. The Cytoplasmic segment spans residues 60-87 (KCKCKFGQKSGHHPGETPPLITPGSAQS). The disordered stretch occupies residues 66-87 (GQKSGHHPGETPPLITPGSAQS).

This sequence belongs to the FXYD family. As to quaternary structure, regulatory subunit of the sodium/potassium-transporting ATPase which is composed of a catalytic alpha subunit, a non-catalytic beta subunit and an additional regulatory subunit. Interacts with catalytic alpha subunit ATP1A1. Also interacts with non-catalytic beta subunit ATP1B1. Interacts with the ATP1A1-ATP1B1, ATP1A2-ATP1B1 and ATP1A3-ATP1B1 NKA isozymes. Glutathionylated. As to expression, isoform 1: Expressed mainly in differentiated cells (at protein level). Isoform 2: Expressed mainly in undifferentiated cells (at protein level).

The protein resides in the cell membrane. In terms of biological role, associates with and regulates the activity of the sodium/potassium-transporting ATPase (NKA) which transports Na(+) out of the cell and K(+) into the cell. Reduces glutathionylation of the NKA beta-1 subunit ATP1B1, thus reversing glutathionylation-mediated inhibition of ATP1B1. Induces a hyperpolarization-activated chloride current when expressed in Xenopus oocytes. Decreases the apparent K+ and Na+ affinity of the sodium/potassium-transporting ATPase over a large range of membrane potentials. Functionally, decreases the apparent K+ affinity of the sodium/potassium-transporting ATPase only at slightly negative and positive membrane potentials and increases the apparent Na+ affinity over a large range of membrane potentials. The chain is FXYD domain-containing ion transport regulator 3 (FXYD3) from Homo sapiens (Human).